Consider the following 305-residue polypeptide: NADH-cytochrome b5 reductase 1 (305 aa).

A helical membrane pass occupies residues 8–28 (VLLASLGVGLLTLLGVALGAY). One can recognise an FAD-binding FR-type domain in the interval 44–156 (NEKYQLRLLD…RGPSGLLTYA (113 aa)). FAD-binding positions include 136–166 (DSLKIGDVVEFRGPSGLLTYAGKGKFNIQPN) and 175–210 (VARNLGMIAGGTGITPMLQLIRAILKDPEDPTQCFL).

The protein belongs to the flavoprotein pyridine nucleotide cytochrome reductase family. FAD serves as cofactor.

It localises to the membrane. It carries out the reaction 2 Fe(III)-[cytochrome b5] + NADH = 2 Fe(II)-[cytochrome b5] + NAD(+) + H(+). Its function is as follows. NADH-cytochrome b5 reductases are involved in desaturation and elongation of fatty acids, cholesterol biosynthesis, drug metabolism, and, in erythrocyte, methemoglobin reduction. The polypeptide is NADH-cytochrome b5 reductase 1 (CYB5R1) (Bos taurus (Bovine)).